The sequence spans 732 residues: Conidiogenone synthase (732 aa).

The terpene cyclase stretch occupies residues M1–V311. Mg(2+) is bound at residue D97. Residues D97, R169 to D172, N213, S217 to E221, and R307 to Y308 each bind substrate. A DDXXD 1 motif is present at residues D97–Q101. The NSE/DTE signature appears at N213–E221. Positions D312–K732 are prenyltransferase. A disordered region spans residues K348 to N370. Isopentenyl diphosphate is bound by residues K402, R405, and H434. Mg(2+) is bound by residues D441 and D445. The short motif at D441–D445 is the DDXXD 2 element. Residue R450 participates in dimethylallyl diphosphate binding. R451 serves as a coordination point for isopentenyl diphosphate. Residues K529, T530, Q565, N572, K582, and K592 each coordinate dimethylallyl diphosphate.

The protein in the N-terminal section; belongs to the terpene synthase family. It in the C-terminal section; belongs to the FPP/GGPP synthase family. Hexamer. It depends on Mg(2+) as a cofactor.

The enzyme catalyses isopentenyl diphosphate + (2E,6E)-farnesyl diphosphate = (2E,6E,10E)-geranylgeranyl diphosphate + diphosphate. Its pathway is secondary metabolite biosynthesis; terpenoid biosynthesis. Bifunctional terpene synthase; part of the gene cluster that mediates the biosynthesis of conidiogenone, a diterpene known to induce the conidiation. The bifunctional terpene synthase PchDS converts isopentenyl diphosphate (IPP) and dimethylallyl diphosphate (DMAPP) into deoxyconidiogenol. The C-terminal prenyltransferase (PT) domain of PchDS catalyzes formation of GGPP, whereas the N-terminal terpene cyclase (TC) domain catalyzes the cyclization of GGPP into deoxyconidiogenol. The cytochrome P450 monooxygenase PchP450 then catalyzes two rounds of oxidation to furnish conidiogenone. The polypeptide is Conidiogenone synthase (Penicillium rubens (strain ATCC 28089 / DSM 1075 / NRRL 1951 / Wisconsin 54-1255) (Penicillium chrysogenum)).